The following is a 297-amino-acid chain: Protein COFACTOR ASSEMBLY OF COMPLEX C SUBUNIT B CCB4, chloroplastic (297 aa).

The N-terminal 33 residues, 1–33 (MEARIILLRIQIPWSANRQFSHPPLDFPRFIRA), are a transit peptide targeting the chloroplast. At 34 to 70 (SSSSTSQKPKTYEGPKPRKNLVADFISKNDDLVRSLP) the chain is on the stromal side. Residues 71–91 (IYVGGASLLAVLFNRTVSGIA) traverse the membrane as a helical segment. The Lumenal segment spans residues 92 to 103 (PVADASSSQSRA). Residues 104–124 (DLLALGLAVTNLLTGLVWLSI) form a helical membrane-spanning segment. Residues 125–297 (RPKSITPVNP…DSDEISRVTV (173 aa)) lie on the Stromal side of the membrane.

It is found in the plastid. Its subcellular location is the chloroplast thylakoid membrane. Functionally, required for the biogenesis and accumulation of native cytochrome b6 in the thylakoid membrane. Controls the conversion of apocytochrome b6 to holocytochrome b6. Required for covalent binding of the c-type heme to cytochrome b6. This is Protein COFACTOR ASSEMBLY OF COMPLEX C SUBUNIT B CCB4, chloroplastic from Arabidopsis thaliana (Mouse-ear cress).